The chain runs to 220 residues: Claudin-3 (220 aa).

Residues 1 to 8 (MSMGLEIT) are Cytoplasmic-facing. The helical transmembrane segment at 9-29 (GTALAVLGWLGTIVCCALPMW) threads the bilayer. The Extracellular portion of the chain corresponds to 30–80 (RVSAFIGSNIITSQNIWEGLWMNCVVQSTGQMQCKVYDSLLALPQDLQAAR). The helical transmembrane segment at 81 to 101 (ALIVVAILLAAFGLLVALVGA) threads the bilayer. Over 102-115 (QCTNCVQDDTAKAK) the chain is Cytoplasmic. The helical transmembrane segment at 116-136 (ITIVAGVLFLLAALLTLVPVS) threads the bilayer. Topologically, residues 137-159 (WSANTIIRDFYNPVVPEAQKREM) are extracellular. Residues 160–180 (GAGLYVGWAAAALQLLGGALL) traverse the membrane as a helical segment. Residues 181-220 (CCSCPPREKKYTATKVVYSAPRSTGPGASLGTGYDRKDYV) lie on the Cytoplasmic side of the membrane. Y198 carries the post-translational modification Phosphotyrosine. S199 and S209 each carry phosphoserine. The tract at residues 219–220 (YV) is interactions with TJP1, TJP2 and TJP3.

Belongs to the claudin family. In terms of assembly, can form homo- and heteropolymers with other CLDN. Homopolymers interact with CLDN1 and CLDN2 homopolymers. Interacts in cis (within the same plasma membrane) with CLDN19. Directly interacts with TJP1/ZO-1, TJP2/ZO-2 and TJP3/ZO-3.

Its subcellular location is the cell junction. It localises to the tight junction. The protein localises to the cell membrane. Barrier-forming claudin. Plays a major role in tight junction-specific obliteration of the intercellular space, through calcium-independent cell-adhesion activity. The polypeptide is Claudin-3 (CLDN3) (Homo sapiens (Human)).